The chain runs to 96 residues: Small ribosomal subunit protein bS21 (96 aa).

The interval 52 to 96 is disordered; it reads RRARKQARKTAIREGLIAAPKPKARPVSPRRPAAPAPASSPVGAA. Over residues 69–96 the composition is skewed to low complexity; the sequence is AAPKPKARPVSPRRPAAPAPASSPVGAA.

Belongs to the bacterial ribosomal protein bS21 family.

The polypeptide is Small ribosomal subunit protein bS21 (Methylobacterium nodulans (strain LMG 21967 / CNCM I-2342 / ORS 2060)).